The primary structure comprises 261 residues: Receptor expression-enhancing protein 4 (261 aa).

A run of 2 helical transmembrane segments spans residues 1–21 and 35–55; these read MVSW…YPAY and YVRW…ETFT. Residues 177-261 are disordered; it reads ELHRRPIGYP…KKPAQSEPEN (85 aa). The segment covering 191 to 202 has biased composition (basic and acidic residues); it reads ADSDSMDERWSD.

The protein belongs to the DP1 family. In terms of assembly, interacts with microtubules. In terms of tissue distribution, during gastrulation, expressed on the dorsal side of the embryo and then in the neural plate and neural tube. At tailbud stages, expressed in the somites. Expressed in the neural tube later in development.

It localises to the endoplasmic reticulum membrane. Its function is as follows. Microtubule-binding protein required to ensure proper cell division and nuclear envelope reassembly by sequestering the endoplasmic reticulum away from chromosomes during mitosis. Probably acts by clearing the endoplasmic reticulum membrane from metaphase chromosomes. May play a role in the maintenance of both the nervous system and the musculature. The protein is Receptor expression-enhancing protein 4 (reep4) of Xenopus tropicalis (Western clawed frog).